The following is a 446-amino-acid chain: Coiled-coil domain-containing protein 112 (446 aa).

Coiled-coil stretches lie at residues 23–116 and 219–400; these read LEEL…RKID and ERKK…NVSR. Disordered regions lie at residues 247-277 and 394-430; these read NNTP…AVEA and VENN…LLHI. Residues 255–268 are compositionally biased toward basic and acidic residues; it reads NKPEDNQKQKEEQR.

It is found in the cytoplasm. The protein resides in the cytoskeleton. It localises to the microtubule organizing center. The protein localises to the centrosome. Its subcellular location is the centriolar satellite. This is Coiled-coil domain-containing protein 112 (CCDC112) from Macaca fascicularis (Crab-eating macaque).